Reading from the N-terminus, the 337-residue chain is Ketol-acid reductoisomerase (NADP(+)) (337 aa).

In terms of domain architecture, KARI N-terminal Rossmann spans 3–183 (VEMFYDDDAD…GGARAGVIKT (181 aa)). Residues 26-29 (YGSQ), lysine 49, serine 52, serine 54, and 84-87 (DTAQ) each bind NADP(+). Histidine 109 is a catalytic residue. Glycine 135 provides a ligand contact to NADP(+). The 146-residue stretch at 184 to 329 (TFKEETETDL…KKLRDLMSWV (146 aa)) folds into the KARI C-terminal knotted domain. Mg(2+) contacts are provided by aspartate 192, glutamate 196, glutamate 228, and glutamate 232. Residue serine 253 participates in substrate binding.

The protein belongs to the ketol-acid reductoisomerase family. The cofactor is Mg(2+).

The catalysed reaction is (2R)-2,3-dihydroxy-3-methylbutanoate + NADP(+) = (2S)-2-acetolactate + NADPH + H(+). The enzyme catalyses (2R,3R)-2,3-dihydroxy-3-methylpentanoate + NADP(+) = (S)-2-ethyl-2-hydroxy-3-oxobutanoate + NADPH + H(+). Its pathway is amino-acid biosynthesis; L-isoleucine biosynthesis; L-isoleucine from 2-oxobutanoate: step 2/4. It participates in amino-acid biosynthesis; L-valine biosynthesis; L-valine from pyruvate: step 2/4. Involved in the biosynthesis of branched-chain amino acids (BCAA). Catalyzes an alkyl-migration followed by a ketol-acid reduction of (S)-2-acetolactate (S2AL) to yield (R)-2,3-dihydroxy-isovalerate. In the isomerase reaction, S2AL is rearranged via a Mg-dependent methyl migration to produce 3-hydroxy-3-methyl-2-ketobutyrate (HMKB). In the reductase reaction, this 2-ketoacid undergoes a metal-dependent reduction by NADPH to yield (R)-2,3-dihydroxy-isovalerate. This Mycobacterium sp. (strain JLS) protein is Ketol-acid reductoisomerase (NADP(+)).